Here is a 957-residue protein sequence, read N- to C-terminus: ADAMTS-like protein 2 (957 aa).

Residues 1-29 (MDGRRQHPHWAWSLLAVAVVAGGAAPTEA) form the signal peptide. The region spanning 47-106 (AYWWGEWTKWTACSRSCGGGVTSQERHCLQQRRKSVPGTGNRTCVGTSKRYQLCRVQECP) is the TSP type-1 1 domain. Intrachain disulfides connect C59/C100, C63/C105, and C74/C90. N-linked (GlcNAc...) asparagine glycans are attached at residues N87, N374, N435, N482, N518, N530, N539, and N550. A compositionally biased stretch (polar residues) spans 532 to 544 (SSEAPFPNTSASP). A disordered region spans residues 532–568 (SSEAPFPNTSASPPNLAGNRTHKARTRPKARKQGVSP). Residues 551-563 (RTHKARTRPKARK) show a composition bias toward basic residues. TSP type-1 domains lie at 570–624 (DMYR…EFCA), 628–692 (CQPR…PACG), 694–742 (QWEM…TGPP), 743–801 (CDRQ…KNCP), 803–857 (HWLA…TCFE), and 859–914 (PCFK…QPCP). N737 carries an N-linked (GlcNAc...) asparagine glycan. N-linked (GlcNAc...) asparagine glycosylation is present at N813. Residues 918–956 (PDDSCQDQPGTNCALAIKVNLCGHWYYSKACCRSCRPPH) form the PLAC domain.

Interacts with LTBP1. Glycosylated. Can be O-fucosylated by POFUT2 on a serine or a threonine residue found within the consensus sequence C1-X(2)-(S/T)-C2-G of the TSP type-1 repeat domains where C1 and C2 are the first and second cysteine residue of the repeat, respectively. Fucosylated repeats can then be further glycosylated by the addition of a beta-1,3-glucose residue by the glucosyltransferase, B3GALTL. Fucosylation mediates the efficient secretion of ADAMTS family members. Can also be C-glycosylated with one or two mannose molecules on tryptophan residues within the consensus sequence W-X-X-W of the TPRs, and N-glycosylated. These other glycosylations can also facilitate secretion.

The protein resides in the secreted. The chain is ADAMTS-like protein 2 (Adamtsl2) from Mus musculus (Mouse).